Reading from the N-terminus, the 191-residue chain is Peptidyl-tRNA hydrolase (191 aa).

Y17 lines the tRNA pocket. H22 functions as the Proton acceptor in the catalytic mechanism. TRNA-binding residues include Y68, N70, and N116.

It belongs to the PTH family. As to quaternary structure, monomer.

The protein resides in the cytoplasm. It carries out the reaction an N-acyl-L-alpha-aminoacyl-tRNA + H2O = an N-acyl-L-amino acid + a tRNA + H(+). Its function is as follows. Hydrolyzes ribosome-free peptidyl-tRNAs (with 1 or more amino acids incorporated), which drop off the ribosome during protein synthesis, or as a result of ribosome stalling. Catalyzes the release of premature peptidyl moieties from peptidyl-tRNA molecules trapped in stalled 50S ribosomal subunits, and thus maintains levels of free tRNAs and 50S ribosomes. This is Peptidyl-tRNA hydrolase from Francisella tularensis subsp. holarctica (strain FTNF002-00 / FTA).